A 133-amino-acid chain; its full sequence is MRHRKSGRQLNRNSSHRKAMFSNMAGSLVKHEIIKTTLPKAKELRRVIEPLITLAKTDSVANRRLAFARTRDNEVVGKLFSEIGPRNADRPGGYTRILKCGFRTGDNAPMAYIELVGRPATSEAVQEDAQSAE.

This sequence belongs to the bacterial ribosomal protein bL17 family. In terms of assembly, part of the 50S ribosomal subunit. Contacts protein L32.

This is Large ribosomal subunit protein bL17 from Pseudoalteromonas translucida (strain TAC 125).